A 377-amino-acid chain; its full sequence is 1,3,6,8-tetrahydroxynaphthalene synthase (377 aa).

Cysteine 164 is an active-site residue.

Belongs to the thiolase-like superfamily. Chalcone/stilbene synthases family. Homodimer.

The enzyme catalyses 5 malonyl-CoA + 5 H(+) = naphthalene-1,3,6,8-tetrol + 5 CO2 + 5 CoA + H2O. It functions in the pathway pigment biosynthesis; melanin biosynthesis. Functionally, involved in the biosynthesis of melanin but also various secondary metabolites containing a naphthoquinone ring. Catalyzes the iterative condensation of five CoA-linked malonyl units to form a pentaketide intermediate. THNS subsequently catalyzes the dual intramolecular Claisen and aldol condensations of this linear intermediate to produce the fused ring of 1,3,6,8-tetrahydroxynaphthalene (THN). The protein is 1,3,6,8-tetrahydroxynaphthalene synthase of Streptomyces peucetius subsp. caesius.